The following is a 715-amino-acid chain: 1,4-alpha-glucan branching enzyme GlgB (715 aa).

The Nucleophile role is filled by aspartate 396. The active-site Proton donor is the glutamate 449.

This sequence belongs to the glycosyl hydrolase 13 family. GlgB subfamily. In terms of assembly, monomer.

It catalyses the reaction Transfers a segment of a (1-&gt;4)-alpha-D-glucan chain to a primary hydroxy group in a similar glucan chain.. Its pathway is glycan biosynthesis; glycogen biosynthesis. In terms of biological role, catalyzes the formation of the alpha-1,6-glucosidic linkages in glycogen by scission of a 1,4-alpha-linked oligosaccharide from growing alpha-1,4-glucan chains and the subsequent attachment of the oligosaccharide to the alpha-1,6 position. This chain is 1,4-alpha-glucan branching enzyme GlgB, found in Vibrio vulnificus (strain CMCP6).